The sequence spans 152 residues: Superoxide dismutase [Cu-Zn] (152 aa).

Positions 44, 46, and 61 each coordinate Cu cation. Residues H61, H69, H78, and D81 each coordinate Zn(2+). H118 provides a ligand contact to Cu cation.

This sequence belongs to the Cu-Zn superoxide dismutase family. As to quaternary structure, homodimer. The cofactor is Cu cation. Zn(2+) is required as a cofactor.

The protein localises to the cytoplasm. The enzyme catalyses 2 superoxide + 2 H(+) = H2O2 + O2. In terms of biological role, destroys radicals which are normally produced within the cells and which are toxic to biological systems. The sequence is that of Superoxide dismutase [Cu-Zn] from Drosophila pseudoobscura pseudoobscura (Fruit fly).